The primary structure comprises 103 residues: Large ribosomal subunit protein bL21 (103 aa).

The protein belongs to the bacterial ribosomal protein bL21 family. As to quaternary structure, part of the 50S ribosomal subunit. Contacts protein L20.

In terms of biological role, this protein binds to 23S rRNA in the presence of protein L20. In Brevibacillus brevis (strain 47 / JCM 6285 / NBRC 100599), this protein is Large ribosomal subunit protein bL21.